We begin with the raw amino-acid sequence, 99 residues long: MMNMQNMMRQAQKLQKQMEQSQAELAAMQFVGKSAQDLVQATLTGDKKVVSIDFNPAVVDPEDLETLSDMTVQAINSALEQIDETTKKKLGAFAGKLPF.

It belongs to the YbaB/EbfC family. In terms of assembly, homodimer.

The protein localises to the cytoplasm. Its subcellular location is the nucleoid. Its function is as follows. Binds to DNA and alters its conformation. May be involved in regulation of gene expression, nucleoid organization and DNA protection. This Streptococcus pneumoniae (strain ATCC 700669 / Spain 23F-1) protein is Nucleoid-associated protein SPN23F10240.